Here is a 329-residue protein sequence, read N- to C-terminus: MSGSVTEFLKPRLVEIDNVSPTRAKVTLEPLERGFGHTLGNALRRILLSSMPGCAVTEVEIDGVLHEYSTKEGVQEDVIEILLNLKGLAVRLEGKTEATLTLVKSGAGPVLAGDIQHDGDVEIVNPSHVLCTLTGEAELSMRIKVEMGRGYVPASTRRSSEEDDRPIGRLLVDASFSPVSRISYNVESARVEQRTDLDKLIIDMETNGTIDPEEAIRRSATILAEQLDAFVELRDMSEPVEKEEKPEFDPILLRPVDDLELTVRSANCLKAEAIQYIGDLVQRTEVELLKTPNLGKKSLTEIKDVLASRGLSLGMRLENWPPESIAEKD.

Residues 1-234 (MSGSVTEFLK…EQLDAFVELR (234 aa)) are alpha N-terminal domain (alpha-NTD). Residues 248–329 (FDPILLRPVD…WPPESIAEKD (82 aa)) are alpha C-terminal domain (alpha-CTD).

It belongs to the RNA polymerase alpha chain family. Homodimer. The RNAP catalytic core consists of 2 alpha, 1 beta, 1 beta' and 1 omega subunit. When a sigma factor is associated with the core the holoenzyme is formed, which can initiate transcription.

It catalyses the reaction RNA(n) + a ribonucleoside 5'-triphosphate = RNA(n+1) + diphosphate. In terms of biological role, DNA-dependent RNA polymerase catalyzes the transcription of DNA into RNA using the four ribonucleoside triphosphates as substrates. The sequence is that of DNA-directed RNA polymerase subunit alpha from Pseudoalteromonas atlantica (strain T6c / ATCC BAA-1087).